Consider the following 132-residue polypeptide: Small ribosomal subunit protein uS8 (132 aa).

This sequence belongs to the universal ribosomal protein uS8 family. Part of the 30S ribosomal subunit. Contacts proteins S5 and S12.

One of the primary rRNA binding proteins, it binds directly to 16S rRNA central domain where it helps coordinate assembly of the platform of the 30S subunit. The polypeptide is Small ribosomal subunit protein uS8 (Anaeromyxobacter dehalogenans (strain 2CP-C)).